Reading from the N-terminus, the 376-residue chain is 2-hydroxypropyl-CoM lyase (376 aa).

3 residues coordinate Zn(2+): His-218, Cys-220, and Cys-341.

The protein belongs to the vitamin-B12 independent methionine synthase family. Homohexamer. Component I of the aliphatic epoxide carboxylation complex together with components II, III and IV. The cofactor is Zn(2+).

It carries out the reaction (R)-2-hydroxypropyl-coenzyme M = (R)-1,2-epoxypropane + coenzyme M. The catalysed reaction is (S)-2-hydroxypropyl-coenzyme M = (S)-1,2-epoxypropane + coenzyme M. It functions in the pathway alkene metabolism; propylene degradation. With respect to regulation, inhibited by methylepoxypropane. Inhibited by the zinc chelator 4-(2-pyridylazo)resorcinol (PAR), in the presence of p- (hydroxymercuri)benzenesulfonic acid (PMPS), and by EDTA. Not inhibited by the coenzyme M analog 2-bromoethanesulfonate (BES). Functionally, involved in aliphatic epoxide carboxylation. Catalyzes the addition of coenzyme M (CoM) to either R- or S-epoxypropane to form the thioether conjugate 2-hydroxypropyl-CoM. Catalyzes the reaction of CoM with R-epoxypropane at a rate approximately twice of that with S-epoxypropane. The CoM analogs 2-mercaptopropionate, 2-mercaptoethanol and cysteine substitute poorly for CoM as the thiol substrate. This chain is 2-hydroxypropyl-CoM lyase, found in Xanthobacter autotrophicus (strain ATCC BAA-1158 / Py2).